Reading from the N-terminus, the 296-residue chain is D-alanine--D-alanine ligase (296 aa).

An ATP-grasp domain is found at 103 to 293; the sequence is KEILMHYRMP…FDSFVKRIIE (191 aa). 129–180 contacts ATP; sequence ISFPVAVKPSSGGSSIATFKVKSIQELKHAYEEASKYGEVMIEQWVTGKEIT. Residues Asp-247, Glu-260, and Asn-262 each coordinate Mg(2+).

This sequence belongs to the D-alanine--D-alanine ligase family. Mg(2+) is required as a cofactor. Mn(2+) serves as cofactor.

The protein resides in the cytoplasm. The catalysed reaction is 2 D-alanine + ATP = D-alanyl-D-alanine + ADP + phosphate + H(+). Its pathway is cell wall biogenesis; peptidoglycan biosynthesis. In terms of biological role, cell wall formation. This Francisella tularensis subsp. tularensis (strain WY96-3418) protein is D-alanine--D-alanine ligase.